Here is an 859-residue protein sequence, read N- to C-terminus: Active breakpoint cluster region-related protein (859 aa).

The interval 27–84 (DDYDAEGNEEQKGPPEGSETMPYIDESPTMSPQLSARSQGGGDSISPTPPEGLAPGVE) is disordered. Polar residues predominate over residues 54–64 (PTMSPQLSARS). At serine 57 the chain carries Phosphoserine. The region spanning 91–284 (MRKLVLSGFL…QNFLSSINED (194 aa)) is the DH domain. The PH domain maps to 301–459 (QLVKDGFLVE…WREAIQKLQK (159 aa)). The region spanning 484 to 613 (TVHNIPVTSN…ETKNWHTDVI (130 aa)) is the C2 domain. In terms of domain architecture, Rho-GAP spans 647–845 (VKISVVTKRE…YYLQHPPISF (199 aa)).

In terms of assembly, interacts with DLG4.

The protein localises to the cell projection. It localises to the dendritic spine. Its subcellular location is the axon. It is found in the synapse. In terms of biological role, protein with a unique structure having two opposing regulatory activities toward small GTP-binding proteins. The C-terminus is a GTPase-activating protein domain which stimulates GTP hydrolysis by RAC1, RAC2 and CDC42. Accelerates the intrinsic rate of GTP hydrolysis of RAC1 or CDC42, leading to down-regulation of the active GTP-bound form. The central Dbl homology (DH) domain functions as guanine nucleotide exchange factor (GEF) that modulates the GTPases CDC42, RHOA and RAC1. Promotes the conversion of CDC42, RHOA and RAC1 from the GDP-bound to the GTP-bound form. Functions as an important negative regulator of neuronal RAC1 activity. Regulates macrophage functions such as CSF1-directed motility and phagocytosis through the modulation of RAC1 activity. This Bos taurus (Bovine) protein is Active breakpoint cluster region-related protein (ABR).